Consider the following 336-residue polypeptide: Glyceraldehyde-3-phosphate dehydrogenase (336 aa).

Residues 12-13, aspartate 34, arginine 78, and serine 120 each bind NAD(+); that span reads RI. Residues 151–153 and threonine 182 contribute to the D-glyceraldehyde 3-phosphate site; that span reads SCT. Cysteine 152 serves as the catalytic Nucleophile. An NAD(+)-binding site is contributed by asparagine 183. Residues 211–212 and arginine 234 each bind D-glyceraldehyde 3-phosphate; that span reads NG. Asparagine 316 contributes to the NAD(+) binding site.

It belongs to the glyceraldehyde-3-phosphate dehydrogenase family. In terms of assembly, homotetramer.

The protein resides in the cytoplasm. The enzyme catalyses D-glyceraldehyde 3-phosphate + phosphate + NAD(+) = (2R)-3-phospho-glyceroyl phosphate + NADH + H(+). It functions in the pathway carbohydrate degradation; glycolysis; pyruvate from D-glyceraldehyde 3-phosphate: step 1/5. Catalyzes the oxidative phosphorylation of glyceraldehyde 3-phosphate (G3P) to 1,3-bisphosphoglycerate (BPG) using the cofactor NAD. The first reaction step involves the formation of a hemiacetal intermediate between G3P and a cysteine residue, and this hemiacetal intermediate is then oxidized to a thioester, with concomitant reduction of NAD to NADH. The reduced NADH is then exchanged with the second NAD, and the thioester is attacked by a nucleophilic inorganic phosphate to produce BPG. The chain is Glyceraldehyde-3-phosphate dehydrogenase (gap) from Heyndrickxia coagulans (Weizmannia coagulans).